Consider the following 547-residue polypeptide: Chaperonin GroEL (547 aa).

ATP-binding positions include 30 to 33, Lys-51, 87 to 91, Gly-415, 478 to 480, and Asp-494; these read TLGP, DGTTT, and NAA.

Belongs to the chaperonin (HSP60) family. Forms a cylinder of 14 subunits composed of two heptameric rings stacked back-to-back. Interacts with the co-chaperonin GroES.

It localises to the cytoplasm. The enzyme catalyses ATP + H2O + a folded polypeptide = ADP + phosphate + an unfolded polypeptide.. In terms of biological role, together with its co-chaperonin GroES, plays an essential role in assisting protein folding. The GroEL-GroES system forms a nano-cage that allows encapsulation of the non-native substrate proteins and provides a physical environment optimized to promote and accelerate protein folding. In Geobacter sp. (strain M21), this protein is Chaperonin GroEL.